Consider the following 216-residue polypeptide: Probable nicotinate-nucleotide adenylyltransferase (216 aa).

It belongs to the NadD family.

It catalyses the reaction nicotinate beta-D-ribonucleotide + ATP + H(+) = deamido-NAD(+) + diphosphate. Its pathway is cofactor biosynthesis; NAD(+) biosynthesis; deamido-NAD(+) from nicotinate D-ribonucleotide: step 1/1. Functionally, catalyzes the reversible adenylation of nicotinate mononucleotide (NaMN) to nicotinic acid adenine dinucleotide (NaAD). This is Probable nicotinate-nucleotide adenylyltransferase from Geobacillus kaustophilus (strain HTA426).